The sequence spans 810 residues: Transmembrane GTPase Marf (810 aa).

Residues 1 to 637 (MAAYLNRTIS…TTTPVEATPV (637 aa)) are Cytoplasmic-facing. The residue at position 8 (threonine 8) is a Phosphothreonine. Residues 13 to 40 (TGQTGPADDDRHASSTDTVDKSGPGSPL) are disordered. Over residues 20–32 (DDDRHASSTDTVD) the composition is skewed to basic and acidic residues. At serine 38 the chain carries Phosphoserine. The region spanning 134–382 (QRDHMKVAFF…IRYFEFQDFE (249 aa)) is the Dynamin-type G domain. Residues 144-151 (GRTSNGKS) are G1 motif. Residue 147-152 (SNGKSS) coordinates GTP. Residues 170 to 171 (TT) form a G2 motif region. Residues 239–242 (DSPG) form a G3 motif region. 298–301 (NRWD) contributes to the GTP binding site. Residues 298–301 (NRWD) form a G4 motif region. Position 327 (lysine 327) is a region of interest, G5 motif. Residue serine 345 participates in GTP binding. Residues 427 to 476 (RNLKQDQKNLLTERIQGTETQMMQVTREMKMKIHNMVEEVEEKVSKALNE) adopt a coiled-coil conformation. Residue threonine 553 is modified to Phosphothreonine. A Phosphoserine modification is found at serine 554. Position 555 is a phosphothreonine (threonine 555). The segment at 609–630 (GQPALVNRQSSIGHSVSTPTTT) is disordered. Residues 638 to 648 (CLLPAPVVAGI) traverse the membrane as a helical segment. The Mitochondrial intermembrane segment spans residues 649–668 (TPEQLSLISRFAVSSIGSQG). The chain crosses the membrane as a helical span at residues 669–689 (TVGGLVVAGVMLKTIGWRVLV). Residues 690-810 (GVGALYGCIY…IFEHNYISPQ (121 aa)) lie on the Cytoplasmic side of the membrane. Residues 759–806 (TATTDMNDELKTLDSQLNILEANQKQLKLLRNKANYIQNELDIFEHNY) adopt a coiled-coil conformation.

The protein belongs to the TRAFAC class dynamin-like GTPase superfamily. Dynamin/Fzo/YdjA family. Mitofusin subfamily. As to quaternary structure, interacts with Mul1. Post-translationally, ubiquitinated by park and Mul1. Ubiquitinated, probably by HUWE1, when dietary stearate (C18:0) levels are low; ubiquitination inhibits mitochondrial fusion. As to expression, widely expressed in embryos, accumulating in the mesoderm and endoderm during gut development. In the male germ line, it is expressed in spermatogonia, spermatocytes and early spermatids.

The protein localises to the mitochondrion outer membrane. It carries out the reaction GTP + H2O = GDP + phosphate + H(+). Functionally, mitochondrial outer membrane GTPase that mediates mitochondrial clustering and fusion. Mitochondrial fusion is the physical merging of mitochondria that gives rise to mitochondrial networks, and this process is counterbalanced by mitochondrial fission which fragments networks. Promotes, but is not required for park recruitment to dysfunctional mitochondria. The chain is Transmembrane GTPase Marf (Marf) from Drosophila melanogaster (Fruit fly).